The sequence spans 89 residues: Large ribosomal subunit protein bL27 (89 aa).

Residues 1 to 21 (MAHKKAGGSSRNGRDSKGKRL) form a disordered region.

It belongs to the bacterial ribosomal protein bL27 family.

In Bradyrhizobium sp. (strain ORS 278), this protein is Large ribosomal subunit protein bL27.